The following is a 352-amino-acid chain: UDP-N-acetylglucosamine--N-acetylmuramyl-(pentapeptide) pyrophosphoryl-undecaprenol N-acetylglucosamine transferase (352 aa).

UDP-N-acetyl-alpha-D-glucosamine is bound by residues 11–13 (TGG), Asn120, Arg161, Ser188, and Gln286.

Belongs to the glycosyltransferase 28 family. MurG subfamily.

It localises to the cell inner membrane. The enzyme catalyses di-trans,octa-cis-undecaprenyl diphospho-N-acetyl-alpha-D-muramoyl-L-alanyl-D-glutamyl-meso-2,6-diaminopimeloyl-D-alanyl-D-alanine + UDP-N-acetyl-alpha-D-glucosamine = di-trans,octa-cis-undecaprenyl diphospho-[N-acetyl-alpha-D-glucosaminyl-(1-&gt;4)]-N-acetyl-alpha-D-muramoyl-L-alanyl-D-glutamyl-meso-2,6-diaminopimeloyl-D-alanyl-D-alanine + UDP + H(+). The protein operates within cell wall biogenesis; peptidoglycan biosynthesis. Its function is as follows. Cell wall formation. Catalyzes the transfer of a GlcNAc subunit on undecaprenyl-pyrophosphoryl-MurNAc-pentapeptide (lipid intermediate I) to form undecaprenyl-pyrophosphoryl-MurNAc-(pentapeptide)GlcNAc (lipid intermediate II). The chain is UDP-N-acetylglucosamine--N-acetylmuramyl-(pentapeptide) pyrophosphoryl-undecaprenol N-acetylglucosamine transferase from Prochlorococcus marinus (strain NATL1A).